The sequence spans 201 residues: Prostamide/prostaglandin F synthase (201 aa).

The protein belongs to the peroxiredoxin-like PRXL2 family. Prostamide/prostaglandin F synthase subfamily.

Its subcellular location is the cytoplasm. The protein localises to the cytosol. The catalysed reaction is prostaglandin H2 + [thioredoxin]-dithiol = prostaglandin F2alpha + [thioredoxin]-disulfide. It carries out the reaction prostamide F2alpha + [thioredoxin]-disulfide = prostamide H2 + [thioredoxin]-dithiol. In terms of biological role, catalyzes the reduction of prostaglandin-ethanolamide H(2) (prostamide H(2)) to prostamide F(2alpha) with NADPH as proton donor. Also able to reduce prostaglandin H(2) to prostaglandin F(2alpha). In Danio rerio (Zebrafish), this protein is Prostamide/prostaglandin F synthase (prxl2b).